The sequence spans 314 residues: Deoxymugineic acid synthase 1 (314 aa).

The segment at 1–21 is disordered; it reads MGAGDRTVAGMPRIGMGTAVQ. Position 44 (Asp44) interacts with NADP(+). The active-site Proton donor is the Tyr49. His112 contributes to the substrate binding site. Residues 158-159, Gln180, 258-266, and 273-281 each bind NADP(+); these read AN, FDEARMREN, and ELTEEERRR.

It belongs to the aldo/keto reductase family.

It carries out the reaction 2'-deoxymugineate + NAD(+) = 3''-deamino-3''-oxonicotianamine + NADH + H(+). The catalysed reaction is 2'-deoxymugineate + NADP(+) = 3''-deamino-3''-oxonicotianamine + NADPH + H(+). It functions in the pathway siderophore biosynthesis. In terms of biological role, catalyzes the reduction of a 3''-keto intermediate during the biosynthesis of 2'-deoxymugineic acid (DMA) from L-Met. Involved in the formation of phytosiderophores (MAs) belonging to the mugineic acid family and required to acquire iron. This chain is Deoxymugineic acid synthase 1, found in Hordeum vulgare (Barley).